The sequence spans 49 residues: Light-harvesting protein B800/850/890 alpha-3 chain (49 aa).

Over 1-14 (MNQARIWLVVKPSV) the chain is Cytoplasmic. Residues 15–35 (GLPLLLGVVLLIALLVHGAIL) form a helical membrane-spanning segment. His-31 contributes to the a bacteriochlorophyll binding site. At 36–49 (TNTSWYPTYFEGNW) the chain is on the periplasmic side.

The protein belongs to the antenna complex alpha subunit family. In terms of assembly, the core complex is formed by different alpha and beta chains, binding bacteriochlorophyll molecules, and arranged most probably in tetrameric structures disposed around the reaction center. The non-pigmented gamma chains may constitute additional components.

Its subcellular location is the cell inner membrane. Functionally, antenna complexes are light-harvesting systems, which transfer the excitation energy to the reaction centers. This is Light-harvesting protein B800/850/890 alpha-3 chain from Halorhodospira halophila (strain DSM 244 / SL1) (Ectothiorhodospira halophila (strain DSM 244 / SL1)).